The following is a 239-amino-acid chain: Ras-like protein B (239 aa).

GTP contacts are provided by residues 13–18 (GVGKTA), 29–35 (VETYDPT), 59–60 (AG), 139–142 (NKSD), and 169–171 (SAK). An Effector region motif is present at residues 32–40 (YDPTIEDSY). The segment at 191-227 (RQQQQGGRAQDRRPTGLGPMRDRDAGPEYPKTFRPDR) is disordered. Positions 199 to 226 (AQDRRPTGLGPMRDRDAGPEYPKTFRPD) are enriched in basic and acidic residues.

This sequence belongs to the small GTPase superfamily. Ras family. As to quaternary structure, interacts with mpkA.

The catalysed reaction is GTP + H2O = GDP + phosphate + H(+). Ras-like protein involved in the activation of Ras protein signal transduction. Ras proteins bind GDP/GTP and possess intrinsic GTPase activity. Plays a role in hyphal morphology and conidiophore development. Required for full virulence. The protein is Ras-like protein B of Aspergillus fumigatus (strain ATCC MYA-4609 / CBS 101355 / FGSC A1100 / Af293) (Neosartorya fumigata).